The following is a 481-amino-acid chain: MLLKLYNTKTKSLSDIKNFSDTKVYACGPTVYNYAHIGNLRTYIFEDLLIKSLRLLKYNVNYAMNITDIGHLTGDFDEGEDKVVKAARERGLTVYEISRFFTEAFFDDCAKLNIVYPDKVLVASEYIASMIEVVKVLEQNGFTYFVNGNVYFDTSRFNGYGQMAGINLNNFGRSSVSRVEIDLSKKNKSDFVLWFTNSKFKDQEMKWDSPWGFGYPSWHLECAAMNLDYFKSTLDIHLGGVDHVGVHHINEIAIAECYLNKMWCDMFVHGEFLIMEDEKMSKSNNNFITIKDLESDGFSPLDFRYFCLTAHYRTQLKFTFSNLRACKIARENMLNKLTFFYSSLSQFDMALLNKNCENIESVSENKYYNNFLEKIAFDLSIPQALALLWDIVKDDDLSALLKLLLAFKFDEVLSLGLKEGVLREIERDRVNIDDTMHSLIEERRLAKLRKDFKRADEIREYFRSKGFVLIDTEEGTKVKRG.

Cys-27 lines the Zn(2+) pocket. Positions 29-39 (PTVYNYAHIGN) match the 'HIGH' region motif. Residues Cys-222, His-247, and Glu-251 each contribute to the Zn(2+) site. The 'KMSKS' region motif lies at 279 to 283 (KMSKS). Lys-282 provides a ligand contact to ATP.

This sequence belongs to the class-I aminoacyl-tRNA synthetase family. In terms of assembly, monomer. It depends on Zn(2+) as a cofactor.

It is found in the cytoplasm. It catalyses the reaction tRNA(Cys) + L-cysteine + ATP = L-cysteinyl-tRNA(Cys) + AMP + diphosphate. The sequence is that of Cysteine--tRNA ligase from Borrelia hermsii (strain HS1 / DAH).